Here is a 392-residue protein sequence, read N- to C-terminus: Bifunctional enzyme Fae/Hps (392 aa).

A formaldehyde-activating enzyme region spans residues 1 to 161 (MFLVGEALIG…YEKERSVHPV (161 aa)). His17 functions as the Proton donor in the catalytic mechanism. Substrate is bound by residues Asp19, Leu48, Lys66, Thr68, and Gln83. Positions 162–392 (MGYRVMRLWD…IDQYRIMTDF (231 aa)) are 3-hexulose-6-phosphate synthase.

This sequence in the N-terminal section; belongs to the formaldehyde-activating enzyme family. The protein in the C-terminal section; belongs to the HPS/KGPDC family. HPS subfamily.

It catalyses the reaction 5,6,7,8-tetrahydromethanopterin + formaldehyde = 5,10-methylenetetrahydromethanopterin + H2O. It carries out the reaction D-ribulose 5-phosphate + formaldehyde = D-arabino-hex-3-ulose 6-phosphate. Its pathway is carbohydrate biosynthesis; D-ribose 5-phosphate biosynthesis. Its function is as follows. Catalyzes the condensation of formaldehyde with tetrahydromethanopterin (H(4)MPT) to 5,10-methylenetetrahydromethanopterin. Functionally, catalyzes the reversible formation of ribulose-5-phosphate and formaldehyde from 3-hexulose-6-phosphate. The sequence is that of Bifunctional enzyme Fae/Hps from Methanothrix thermoacetophila (strain DSM 6194 / JCM 14653 / NBRC 101360 / PT) (Methanosaeta thermophila).